The primary structure comprises 315 residues: Methionyl-tRNA formyltransferase (315 aa).

(6S)-5,6,7,8-tetrahydrofolate is bound at residue 113–116 (SILP).

It belongs to the Fmt family.

The catalysed reaction is L-methionyl-tRNA(fMet) + (6R)-10-formyltetrahydrofolate = N-formyl-L-methionyl-tRNA(fMet) + (6S)-5,6,7,8-tetrahydrofolate + H(+). Its function is as follows. Attaches a formyl group to the free amino group of methionyl-tRNA(fMet). The formyl group appears to play a dual role in the initiator identity of N-formylmethionyl-tRNA by promoting its recognition by IF2 and preventing the misappropriation of this tRNA by the elongation apparatus. The protein is Methionyl-tRNA formyltransferase of Vibrio cholerae serotype O1 (strain M66-2).